The chain runs to 118 residues: Large ribosomal subunit protein bL19 (118 aa).

It belongs to the bacterial ribosomal protein bL19 family.

In terms of biological role, this protein is located at the 30S-50S ribosomal subunit interface and may play a role in the structure and function of the aminoacyl-tRNA binding site. This chain is Large ribosomal subunit protein bL19, found in Campylobacter jejuni subsp. jejuni serotype O:6 (strain 81116 / NCTC 11828).